Reading from the N-terminus, the 172-residue chain is RTX-I toxin-activating lysine-acyltransferase ApxIC (172 aa).

Active-site residues include His24 and Asp93.

This sequence belongs to the RTX toxin acyltransferase family. As to quaternary structure, homodimer.

The protein resides in the cytoplasm. It catalyses the reaction a fatty acyl-[ACP] + L-lysyl-[protein] = N(6)-(fatty acyl)-L-lysyl-[protein] + holo-[ACP] + H(+). Protein-lysine acyltransferase that catalyzes fatty acylation of the protoxin, thereby converting it to the active toxin. This chain is RTX-I toxin-activating lysine-acyltransferase ApxIC, found in Actinobacillus pleuropneumoniae (Haemophilus pleuropneumoniae).